The sequence spans 426 residues: Enolase (426 aa).

Glutamine 163 lines the (2R)-2-phosphoglycerate pocket. Glutamate 205 functions as the Proton donor in the catalytic mechanism. 3 residues coordinate Mg(2+): aspartate 242, glutamate 286, and aspartate 313. (2R)-2-phosphoglycerate contacts are provided by lysine 338, arginine 367, serine 368, and lysine 389. The Proton acceptor role is filled by lysine 338.

It belongs to the enolase family. The cofactor is Mg(2+).

It is found in the cytoplasm. Its subcellular location is the secreted. The protein localises to the cell surface. It carries out the reaction (2R)-2-phosphoglycerate = phosphoenolpyruvate + H2O. Its pathway is carbohydrate degradation; glycolysis; pyruvate from D-glyceraldehyde 3-phosphate: step 4/5. In terms of biological role, catalyzes the reversible conversion of 2-phosphoglycerate (2-PG) into phosphoenolpyruvate (PEP). It is essential for the degradation of carbohydrates via glycolysis. This is Enolase from Helicobacter pylori (strain Shi470).